Consider the following 249-residue polypeptide: BPI fold-containing family A member 2 (249 aa).

Positions 1-18 (MLQLWKLVLLCGVLTGTS) are cleaved as a signal peptide. 2 N-linked (GlcNAc...) asparagine glycosylation sites follow: asparagine 124 and asparagine 132. Cysteine 174 and cysteine 217 are oxidised to a cystine.

This sequence belongs to the BPI/LBP/Plunc superfamily. Plunc family. In terms of tissue distribution, detected in submandibular gland. Secreted into saliva.

It is found in the secreted. Functionally, has strong antibacterial activity against P.aeruginosa. This is BPI fold-containing family A member 2 (BPIFA2) from Homo sapiens (Human).